Reading from the N-terminus, the 294-residue chain is MSSSFQTIALIGKHKNPGIVTPLSSLARYLQSRNLTVLLDNLTAASMDEDSYPAVAMEEIGSRADLAIVLGGDGTMLNIARKLAPFNVPLVGINQGRLGFLTDLSIVTMQQTLGAILEGRYITEQRMLLYAEVARSNVTTFGGLALNDVAVNRGIGGNMIEFEVRINDEYVCLLRSDGLIVATPTGSTAYALSAGGPILHPSLDLVALVPVSPHTLSNRPIVVGPDAAVEILMQRTAVARVHFDSHSHFDLEENDKVMVRRSPHRVTLLHPSDHSYYRMLREKLGWSGLPRNPT.

Asp-73 serves as the catalytic Proton acceptor. NAD(+) is bound by residues 73-74 (DG), 147-148 (ND), Arg-175, Asp-177, and 188-193 (TAYALS).

This sequence belongs to the NAD kinase family. Requires a divalent metal cation as cofactor.

It is found in the cytoplasm. It carries out the reaction NAD(+) + ATP = ADP + NADP(+) + H(+). In terms of biological role, involved in the regulation of the intracellular balance of NAD and NADP, and is a key enzyme in the biosynthesis of NADP. Catalyzes specifically the phosphorylation on 2'-hydroxyl of the adenosine moiety of NAD to yield NADP. The chain is NAD kinase from Nitrosospira multiformis (strain ATCC 25196 / NCIMB 11849 / C 71).